The sequence spans 194 residues: Accessory gene regulator protein B (194 aa).

The next 5 helical transmembrane spans lie at 44-64, 80-100, 107-127, 142-162, and 163-183; these read IVVY…LTHL, SSLL…YLII, FVLL…APAA, KILS…TKEP, and VNKL…PIFF.

Belongs to the AgrB family.

The protein resides in the cell membrane. Essential for the production of a quorum sensing system signal molecule, the autoinducing peptide (AIP). This quorum sensing system is responsible for the regulation of the expression of virulence factor genes. Involved in the proteolytic processing of AgrD, the precursor of AIP. This is Accessory gene regulator protein B from Staphylococcus epidermidis.